A 316-amino-acid chain; its full sequence is Transaldolase (316 aa).

Catalysis depends on K131, which acts as the Schiff-base intermediate with substrate.

This sequence belongs to the transaldolase family. Type 1 subfamily. In terms of assembly, homodimer.

The protein resides in the cytoplasm. It carries out the reaction D-sedoheptulose 7-phosphate + D-glyceraldehyde 3-phosphate = D-erythrose 4-phosphate + beta-D-fructose 6-phosphate. The protein operates within carbohydrate degradation; pentose phosphate pathway; D-glyceraldehyde 3-phosphate and beta-D-fructose 6-phosphate from D-ribose 5-phosphate and D-xylulose 5-phosphate (non-oxidative stage): step 2/3. In terms of biological role, transaldolase is important for the balance of metabolites in the pentose-phosphate pathway. The sequence is that of Transaldolase from Buchnera aphidicola subsp. Acyrthosiphon pisum (strain 5A).